Reading from the N-terminus, the 475-residue chain is BTB/POZ domain-containing protein 10 (475 aa).

A disordered region spans residues 1–144 (MAGRPHPYDS…SQSSSDGSCK (144 aa)). A compositionally biased stretch (basic residues) spans 22 to 31 (LHSRPRKLYK). A compositionally biased stretch (basic and acidic residues) spans 57-80 (GHERSRDRRRSSDRSRDSSHERAE). The segment covering 81-94 (SQLTPCIRNVTSPT) has biased composition (polar residues). A compositionally biased stretch (basic and acidic residues) spans 97–107 (HHIEREKDHSS). The span at 108–144 (SRPSSPRPQRASPNGSMSSAGNSSRNSSQSSSDGSCK) shows a compositional bias: low complexity. The interval 146-475 (SGEMVFVYEN…LDPDAQNPML (330 aa)) is interaction with AKT family members. One can recognise a BTB domain in the interval 167-241 (ERVTLIVDNT…YKTGIIRCPD (75 aa)). The interval 451–475 (ELDILPSHPASGNNDLDPDAQNPML) is disordered.

Interacts (via C-terminal 330-amino-acid region) with AKT1; AKT2 and AKT3. Interacts with PPP2CA and PPP1CA. As to expression, ubiquitously expressed (at protein level).

The protein localises to the nucleus. It is found in the cytoplasm. In terms of biological role, plays a major role as an activator of AKT family members by inhibiting PPP2CA-mediated dephosphorylation, thereby keeping AKTs activated. Plays a role in preventing motor neuronal death and in accelerating the growth of pancreatic beta cells. The sequence is that of BTB/POZ domain-containing protein 10 (Btbd10) from Mus musculus (Mouse).